Consider the following 151-residue polypeptide: Cytochrome c-type biogenesis protein CcmE (151 aa).

Over 1-8 the chain is Cytoplasmic; sequence MNPQRKKR. A helical; Signal-anchor for type II membrane protein transmembrane segment spans residues 9 to 29; it reads LFLILGLLAGVAVAVGFALSA. Residues 30 to 151 lie on the Periplasmic side of the membrane; it reads LQQNINLFYT…QAASGAEAKP (122 aa). Positions 124 and 128 each coordinate heme.

This sequence belongs to the CcmE/CycJ family.

The protein resides in the cell inner membrane. In terms of biological role, heme chaperone required for the biogenesis of c-type cytochromes. Transiently binds heme delivered by CcmC and transfers the heme to apo-cytochromes in a process facilitated by CcmF and CcmH. In Pseudomonas putida (strain W619), this protein is Cytochrome c-type biogenesis protein CcmE.